Consider the following 339-residue polypeptide: Phosphate acyltransferase (339 aa).

The protein belongs to the PlsX family. Homodimer. Probably interacts with PlsY.

Its subcellular location is the cytoplasm. The enzyme catalyses a fatty acyl-[ACP] + phosphate = an acyl phosphate + holo-[ACP]. Its pathway is lipid metabolism; phospholipid metabolism. Its function is as follows. Catalyzes the reversible formation of acyl-phosphate (acyl-PO(4)) from acyl-[acyl-carrier-protein] (acyl-ACP). This enzyme utilizes acyl-ACP as fatty acyl donor, but not acyl-CoA. In Helicobacter pylori (strain J99 / ATCC 700824) (Campylobacter pylori J99), this protein is Phosphate acyltransferase.